Here is a 383-residue protein sequence, read N- to C-terminus: S-adenosylmethionine synthase 1 (383 aa).

H15 is a binding site for ATP. D17 serves as a coordination point for Mg(2+). E43 is a binding site for K(+). Positions 56 and 99 each coordinate L-methionine. The flexible loop stretch occupies residues Q99–R109. ATP is bound by residues D162–K164, R228–F229, D237, R243–K244, A260, and K264. Residue D237 coordinates L-methionine. K268 is an L-methionine binding site.

It belongs to the AdoMet synthase family. As to quaternary structure, homotetramer; dimer of dimers. Mg(2+) serves as cofactor. K(+) is required as a cofactor.

Its subcellular location is the cytoplasm. The catalysed reaction is L-methionine + ATP + H2O = S-adenosyl-L-methionine + phosphate + diphosphate. It participates in amino-acid biosynthesis; S-adenosyl-L-methionine biosynthesis; S-adenosyl-L-methionine from L-methionine: step 1/1. In terms of biological role, catalyzes the formation of S-adenosylmethionine (AdoMet) from methionine and ATP. The overall synthetic reaction is composed of two sequential steps, AdoMet formation and the subsequent tripolyphosphate hydrolysis which occurs prior to release of AdoMet from the enzyme. The polypeptide is S-adenosylmethionine synthase 1 (Rhodospirillum rubrum (strain ATCC 11170 / ATH 1.1.1 / DSM 467 / LMG 4362 / NCIMB 8255 / S1)).